Here is an 872-residue protein sequence, read N- to C-terminus: DNA mismatch repair protein MutS (872 aa).

Residue 622-629 participates in ATP binding; the sequence is GPNMAGKS.

Belongs to the DNA mismatch repair MutS family.

In terms of biological role, this protein is involved in the repair of mismatches in DNA. It is possible that it carries out the mismatch recognition step. This protein has a weak ATPase activity. The polypeptide is DNA mismatch repair protein MutS (Geobacter metallireducens (strain ATCC 53774 / DSM 7210 / GS-15)).